Here is a 201-residue protein sequence, read N- to C-terminus: MAIILPELPYAYDALEPQFDAETMTLHHDKHHATYVANANAALEKHPEIGENLEELLADVTKIPEDIRQALINNGGGHLNHALFWELLSPEKQDITPDVAQAIDDAFGSFDAFKEQFTAAATGRFGSGWAWLVVNKEGQLEITSTANQDTPISEGKKPILALDVWEHAYYLNYRNVRPNYIKAFFEIINWKKVSELYQAAK.

Mn(2+) contacts are provided by H27, H81, D163, and H167.

This sequence belongs to the iron/manganese superoxide dismutase family. As to quaternary structure, homodimer. Mn(2+) is required as a cofactor.

Its subcellular location is the secreted. It catalyses the reaction 2 superoxide + 2 H(+) = H2O2 + O2. Its function is as follows. Destroys superoxide anion radicals which are normally produced within the cells and which are toxic to biological systems. This Streptococcus pyogenes serotype M6 (strain ATCC BAA-946 / MGAS10394) protein is Superoxide dismutase [Mn] (sodA).